Consider the following 84-residue polypeptide: Small ribosomal subunit protein bS20 (84 aa).

The protein belongs to the bacterial ribosomal protein bS20 family.

Its function is as follows. Binds directly to 16S ribosomal RNA. The polypeptide is Small ribosomal subunit protein bS20 (Limosilactobacillus reuteri (strain DSM 20016) (Lactobacillus reuteri)).